The sequence spans 905 residues: Protein translocase subunit SecA (905 aa).

ATP is bound by residues Gln87, 105 to 109 (GEGKT), and Asp512. Positions 840-905 (AQRQQEAMAQ…HCHGSKARYA (66 aa)) are disordered. A compositionally biased stretch (low complexity) spans 843 to 852 (QQEAMAQAES). Over residues 853-862 (ENYRTADHQA) the composition is skewed to basic and acidic residues. The segment covering 863–874 (EAQQSESLTEEQ) has biased composition (polar residues). Zn(2+) is bound by residues Cys886, Cys888, Cys897, and His898. Residues 892-905 (KKYKHCHGSKARYA) show a composition bias toward basic residues.

The protein belongs to the SecA family. As to quaternary structure, monomer and homodimer. Part of the essential Sec protein translocation apparatus which comprises SecA, SecYEG and auxiliary proteins SecDF-YajC and YidC. Zn(2+) is required as a cofactor.

Its subcellular location is the cell inner membrane. It is found in the cytoplasm. It catalyses the reaction ATP + H2O + cellular proteinSide 1 = ADP + phosphate + cellular proteinSide 2.. In terms of biological role, part of the Sec protein translocase complex. Interacts with the SecYEG preprotein conducting channel. Has a central role in coupling the hydrolysis of ATP to the transfer of proteins into and across the cell membrane, serving both as a receptor for the preprotein-SecB complex and as an ATP-driven molecular motor driving the stepwise translocation of polypeptide chains across the membrane. This chain is Protein translocase subunit SecA, found in Actinobacillus pleuropneumoniae serotype 3 (strain JL03).